The chain runs to 343 residues: Uroporphyrinogen decarboxylase (343 aa).

Substrate contacts are provided by residues 26–30, D75, Y150, S205, and H319; that span reads RQAGR.

The protein belongs to the uroporphyrinogen decarboxylase family. As to quaternary structure, homodimer.

Its subcellular location is the cytoplasm. It catalyses the reaction uroporphyrinogen III + 4 H(+) = coproporphyrinogen III + 4 CO2. Its pathway is porphyrin-containing compound metabolism; protoporphyrin-IX biosynthesis; coproporphyrinogen-III from 5-aminolevulinate: step 4/4. In terms of biological role, catalyzes the decarboxylation of four acetate groups of uroporphyrinogen-III to yield coproporphyrinogen-III. The protein is Uroporphyrinogen decarboxylase of Syntrophotalea carbinolica (strain DSM 2380 / NBRC 103641 / GraBd1) (Pelobacter carbinolicus).